Consider the following 80-residue polypeptide: Trefoil factor 3 (80 aa).

Positions 1-21 are cleaved as a signal peptide; the sequence is MAARALCMLGLVLALLSSSSA. The P-type domain maps to 30–73; the sequence is NQCAVPAKDRVDCGYPHVTPKECNNRGCCFDSRIPGVPWCFKPL. Intrachain disulfides connect C32-C58, C42-C57, and C52-C69.

Monomer. Homodimer; disulfide-linked. In terms of tissue distribution, expressed in goblet cells of the intestines and colon (at protein level). Expressed by goblet cells of small and large intestinal epithelia and also by the uterus. Also expressed in the hypothalamus where it is detected in paraventricular, periventricular and supraoptic nuclei (at protein level).

The protein resides in the secreted. It localises to the extracellular space. It is found in the extracellular matrix. Its subcellular location is the cytoplasm. Functionally, involved in the maintenance and repair of the intestinal mucosa. Promotes the mobility of epithelial cells in healing processes (motogen). The chain is Trefoil factor 3 (TFF3) from Homo sapiens (Human).